The primary structure comprises 123 residues: Small ribosomal subunit protein uS12 (123 aa).

The residue at position 89 (Asp-89) is a 3-methylthioaspartic acid.

It belongs to the universal ribosomal protein uS12 family. As to quaternary structure, part of the 30S ribosomal subunit. Contacts proteins S8 and S17. May interact with IF1 in the 30S initiation complex.

Its function is as follows. With S4 and S5 plays an important role in translational accuracy. In terms of biological role, interacts with and stabilizes bases of the 16S rRNA that are involved in tRNA selection in the A site and with the mRNA backbone. Located at the interface of the 30S and 50S subunits, it traverses the body of the 30S subunit contacting proteins on the other side and probably holding the rRNA structure together. The combined cluster of proteins S8, S12 and S17 appears to hold together the shoulder and platform of the 30S subunit. This Citrifermentans bemidjiense (strain ATCC BAA-1014 / DSM 16622 / JCM 12645 / Bem) (Geobacter bemidjiensis) protein is Small ribosomal subunit protein uS12.